The chain runs to 429 residues: Adenylosuccinate synthetase (429 aa).

Residues 12–18 (GDEGKGK) and 40–42 (GHT) contribute to the GTP site. Asp13 acts as the Proton acceptor in catalysis. Residues Asp13 and Gly40 each contribute to the Mg(2+) site. IMP is bound by residues 13 to 16 (DEGK), 38 to 41 (NAGH), Thr129, Arg143, Gln223, Thr238, and Arg302. Residue His41 is the Proton donor of the active site. 298-304 (TVTGRRR) serves as a coordination point for substrate. GTP-binding positions include Arg304, 330–332 (KLD), and 412–414 (STS).

This sequence belongs to the adenylosuccinate synthetase family. In terms of assembly, homodimer. Requires Mg(2+) as cofactor.

It is found in the cytoplasm. The enzyme catalyses IMP + L-aspartate + GTP = N(6)-(1,2-dicarboxyethyl)-AMP + GDP + phosphate + 2 H(+). It participates in purine metabolism; AMP biosynthesis via de novo pathway; AMP from IMP: step 1/2. Plays an important role in the de novo pathway of purine nucleotide biosynthesis. Catalyzes the first committed step in the biosynthesis of AMP from IMP. The sequence is that of Adenylosuccinate synthetase from Granulibacter bethesdensis (strain ATCC BAA-1260 / CGDNIH1).